The chain runs to 404 residues: Trigger factor (404 aa).

In terms of domain architecture, PPIase FKBP-type spans K160–P225.

The protein belongs to the FKBP-type PPIase family. Tig subfamily.

It is found in the cytoplasm. The enzyme catalyses [protein]-peptidylproline (omega=180) = [protein]-peptidylproline (omega=0). Functionally, involved in protein export. Acts as a chaperone by maintaining the newly synthesized protein in an open conformation. Functions as a peptidyl-prolyl cis-trans isomerase. The chain is Trigger factor from Thermus thermophilus (strain ATCC BAA-163 / DSM 7039 / HB27).